A 117-amino-acid chain; its full sequence is Large ribosomal subunit protein bL20c (117 aa).

The protein belongs to the bacterial ribosomal protein bL20 family.

It is found in the plastid. It localises to the chloroplast. Its function is as follows. Binds directly to 23S ribosomal RNA and is necessary for the in vitro assembly process of the 50S ribosomal subunit. It is not involved in the protein synthesizing functions of that subunit. This Thalassiosira pseudonana (Marine diatom) protein is Large ribosomal subunit protein bL20c.